The chain runs to 379 residues: Glutamate 5-kinase (379 aa).

ATP is bound at residue K15. S54, D144, and N156 together coordinate substrate. 176–177 (TD) lines the ATP pocket. Positions 282–360 (KGVILVDAGA…GEIERALGYK (79 aa)) constitute a PUA domain.

Belongs to the glutamate 5-kinase family.

It localises to the cytoplasm. It carries out the reaction L-glutamate + ATP = L-glutamyl 5-phosphate + ADP. Its pathway is amino-acid biosynthesis; L-proline biosynthesis; L-glutamate 5-semialdehyde from L-glutamate: step 1/2. Functionally, catalyzes the transfer of a phosphate group to glutamate to form L-glutamate 5-phosphate. This is Glutamate 5-kinase from Anaeromyxobacter dehalogenans (strain 2CP-C).